A 36-amino-acid polypeptide reads, in one-letter code: Lambda-hexatoxin-Hv1b (36 aa).

Cystine bridges form between cysteine 3-cysteine 17, cysteine 10-cysteine 22, cysteine 13-cysteine 14, and cysteine 16-cysteine 33.

It belongs to the neurotoxin 11 (kappa toxin) family. In terms of tissue distribution, expressed by the venom gland.

Its subcellular location is the secreted. In terms of biological role, this excitatory toxin inhibits insect calcium-activated potassium (KCa) channels (Slo-type). This chain is Lambda-hexatoxin-Hv1b, found in Hadronyche versuta (Blue mountains funnel-web spider).